The sequence spans 226 residues: UPF0758 protein GTNG_2548 (226 aa).

Residues 104-226 (VIRCPEDGAK…FISLKEKGYV (123 aa)) enclose the MPN domain. Zn(2+)-binding residues include histidine 175, histidine 177, and aspartate 188. The JAMM motif signature appears at 175 to 188 (HNHPSGDPTPSRED).

This sequence belongs to the UPF0758 family.

The polypeptide is UPF0758 protein GTNG_2548 (Geobacillus thermodenitrificans (strain NG80-2)).